A 454-amino-acid polypeptide reads, in one-letter code: (Z)-3-hexen-1-ol acetyltransferase (454 aa).

Active-site proton acceptor residues include histidine 174 and aspartate 389.

Belongs to the plant acyltransferase family. Expressed in leaves and stems. Lower levels in flowers and barely detected in roots and siliques.

The enzyme catalyses (3Z)-hex-3-en-1-ol + acetyl-CoA = (3Z)-hex-3-en-1-yl acetate + CoA. Its activity is regulated as follows. Inhibited by magnesium, calcium, cobalt, zinc and copper. Acyltransferase involved in the production of green leaf volatiles (GLVs). Uses acetyl-CoA as substrate, but not malonyl-CoA or benzoyl-CoA. Prefers primary, medium-chain-length, aliphatic alcohols. The protein is (Z)-3-hexen-1-ol acetyltransferase (CHAT) of Arabidopsis thaliana (Mouse-ear cress).